Here is a 103-residue protein sequence, read N- to C-terminus: Small ribosomal subunit protein bS18c (103 aa).

Belongs to the bacterial ribosomal protein bS18 family. Part of the 30S ribosomal subunit.

It localises to the plastid. It is found in the chloroplast. This chain is Small ribosomal subunit protein bS18c (rps18), found in Chlorella vulgaris (Green alga).